The sequence spans 99 residues: Putative endopeptidase RzpR (99 aa).

In Escherichia coli (strain K12), this protein is Putative endopeptidase RzpR (rzpR).